The chain runs to 135 residues: Small ribosomal subunit protein uS8 (135 aa).

The protein belongs to the universal ribosomal protein uS8 family. As to quaternary structure, part of the 30S ribosomal subunit. Contacts proteins S5 and S12.

In terms of biological role, one of the primary rRNA binding proteins, it binds directly to 16S rRNA central domain where it helps coordinate assembly of the platform of the 30S subunit. In Corynebacterium urealyticum (strain ATCC 43042 / DSM 7109), this protein is Small ribosomal subunit protein uS8.